The sequence spans 165 residues: Transcription antitermination protein NusB (165 aa).

Belongs to the NusB family.

Functionally, involved in transcription antitermination. Required for transcription of ribosomal RNA (rRNA) genes. Binds specifically to the boxA antiterminator sequence of the ribosomal RNA (rrn) operons. The polypeptide is Transcription antitermination protein NusB (Rhodococcus erythropolis (strain PR4 / NBRC 100887)).